The chain runs to 275 residues: Adaptin ear-binding coat-associated protein 1 (275 aa).

The tract at residues 170–191 is disordered; sequence KGGASKPRTARGGGLSLLPPPP. Arg-180 bears the Omega-N-methylarginine mark. The residue at position 211 (Thr-211) is a Phosphothreonine. 2 consecutive short sequence motifs (WXXF motif) follow at residues 252-255 and 272-275; these read WGDF and WVQF. The disordered stretch occupies residues 254 to 275; it reads DFSTASSSVPNQAPQPSNWVQF. The span at 256 to 275 shows a compositional bias: polar residues; that stretch reads STASSSVPNQAPQPSNWVQF.

The protein belongs to the NECAP family. In terms of assembly, interacts with AP1G1 and AP2A1 components of the adapter protein complexes AP-1 and AP-2. Interacts with the GAE domain proteins GGA1, GGA2 and GGA3.

It localises to the cytoplasmic vesicle. It is found in the clathrin-coated vesicle membrane. The protein resides in the cell membrane. Functionally, involved in endocytosis. This Homo sapiens (Human) protein is Adaptin ear-binding coat-associated protein 1 (NECAP1).